The following is a 363-amino-acid chain: Ribonuclease P protein subunit p40 (363 aa).

In terms of assembly, component of nuclear RNase P and RNase MRP ribonucleoproteins. RNase P consists of a catalytic RNA moiety and about 10 protein subunits; POP1, POP4, POP5, POP7, RPP14, RPP21, RPP25, RPP30, RPP38 and RPP40. Within the RNase P complex, POP1, POP7 and RPP25 form the 'finger' subcomplex, POP5, RPP14, RPP40 and homodimeric RPP30 form the 'palm' subcomplex, and RPP21, POP4 and RPP38 form the 'wrist' subcomplex. All subunits of the RNase P complex interact with the catalytic RNA. Several subunits of RNase P are also part of the RNase MRP complex. RNase MRP consists of a catalytic RNA moiety and about 8 protein subunits; POP1, POP7, RPP25, RPP30, RPP38, RPP40 and possibly also POP4 and POP5.

The protein localises to the nucleus. It is found in the nucleolus. Component of ribonuclease P, a ribonucleoprotein complex that generates mature tRNA molecules by cleaving their 5'-ends. Also a component of the MRP ribonuclease complex, which cleaves pre-rRNA sequences. This chain is Ribonuclease P protein subunit p40 (Rpp40), found in Rattus norvegicus (Rat).